A 156-amino-acid polypeptide reads, in one-letter code: C-type lectin lectoxin-Lei1 (156 aa).

Positions 1 to 23 (MRRFLFLSLGVLVVAFSLNGIGA) are cleaved as a signal peptide. 3 disulfides stabilise this stretch: C27-C38, C55-C154, and C129-C146. The 122-residue stretch at 34–155 (FDRFCYKVIK…CESRNIFICK (122 aa)) folds into the C-type lectin domain. Residues N60 and N99 are each glycosylated (N-linked (GlcNAc...) asparagine). The Sugar-binding motif lies at 119 to 121 (KRN). N142 contacts Ca(2+).

Belongs to the true venom lectin family. As to expression, expressed by the venom gland.

It localises to the secreted. Lectin which recognizes specific carbohydrate structures and agglutinates a variety of animal cells by binding to cell-surface glycoproteins and glycolipids. May be a calcium-dependent lectin. The chain is C-type lectin lectoxin-Lei1 from Leioheterodon madagascariensis (Malagasy giant hognose snake).